Consider the following 150-residue polypeptide: Lipoprotein signal peptidase (150 aa).

A run of 2 helical transmembrane segments spans residues 59–79 and 84–101; these read VFVGVTVLVAIIILAAYRYLP and LLRLSLALMLGGALGNLI. Active-site residues include Asp111 and Asp125. Residues 117-137 traverse the membrane as a helical segment; that stretch reads IWPVFNLADMAIVFGVIILCW.

This sequence belongs to the peptidase A8 family.

The protein resides in the cell membrane. The enzyme catalyses Release of signal peptides from bacterial membrane prolipoproteins. Hydrolyzes -Xaa-Yaa-Zaa-|-(S,diacylglyceryl)Cys-, in which Xaa is hydrophobic (preferably Leu), and Yaa (Ala or Ser) and Zaa (Gly or Ala) have small, neutral side chains.. It functions in the pathway protein modification; lipoprotein biosynthesis (signal peptide cleavage). Functionally, this protein specifically catalyzes the removal of signal peptides from prolipoproteins. This is Lipoprotein signal peptidase from Moorella thermoacetica (strain ATCC 39073 / JCM 9320).